The chain runs to 133 residues: p53 and DNA damage-regulated protein 1 (133 aa).

This sequence belongs to the prefoldin subunit beta family. In terms of assembly, component of the PAQosome complex which is responsible for the biogenesis of several protein complexes and which consists of R2TP complex members RUVBL1, RUVBL2, RPAP3 and PIH1D1, URI complex members PFDN2, PFDN6, PDRG1, UXT and URI1 as well as ASDURF, POLR2E and DNAAF10/WDR92.

It localises to the cytoplasm. May play a role in chaperone-mediated protein folding. This chain is p53 and DNA damage-regulated protein 1 (Pdrg1), found in Rattus norvegicus (Rat).